A 158-amino-acid chain; its full sequence is MSRLPSSFDVEDADVEELSFADKIVYHCKQQPLVPIGTLLTTGAVILAAQNMRIGNRKKTQFYFRWRVGLQAATLAALVAGSFIYGKDKYDQKKKEDQMKEKAKLREQLWIKELERRDAEAQDRKKKAEAARLKTKENEAAIQKLEQELKELEAKASK.

In terms of domain architecture, HIG1 spans 5 to 96; that stretch reads PSSFDVEDAD…KDKYDQKKKE (92 aa). 2 consecutive transmembrane segments (helical) span residues 32–54 and 64–86; these read PLVP…NMRI and FRWR…FIYG. Residues 99–158 are a coiled coil; the sequence is MKEKAKLREQLWIKELERRDAEAQDRKKKAEAARLKTKENEAAIQKLEQELKELEAKASK.

This sequence belongs to the RCF1 family. In terms of assembly, associates with the respiratory chain complex III/complex IV supercomplex.

It is found in the mitochondrion membrane. Cytochrome c oxidase subunit which plays a role in assembly of respiratory supercomplexes. This Candida glabrata (strain ATCC 2001 / BCRC 20586 / JCM 3761 / NBRC 0622 / NRRL Y-65 / CBS 138) (Yeast) protein is Respiratory supercomplex factor 1, mitochondrial (RCF1).